Consider the following 706-residue polypeptide: Polyribonucleotide nucleotidyltransferase (706 aa).

Mg(2+)-binding residues include aspartate 487 and aspartate 493. Residues 553–612 (PRLFTMKINQDKIREVIGKGGETIRAITAETGTEINIAEDGTITIAATTQEAGDAAKKRI) form the KH domain. Residues 622 to 692 (GKVYEGTVVK…DRGRVRLSIK (71 aa)) form the S1 motif domain.

This sequence belongs to the polyribonucleotide nucleotidyltransferase family. Mg(2+) is required as a cofactor.

Its subcellular location is the cytoplasm. The enzyme catalyses RNA(n+1) + phosphate = RNA(n) + a ribonucleoside 5'-diphosphate. In terms of biological role, involved in mRNA degradation. Catalyzes the phosphorolysis of single-stranded polyribonucleotides processively in the 3'- to 5'-direction. This chain is Polyribonucleotide nucleotidyltransferase, found in Neisseria meningitidis serogroup A / serotype 4A (strain DSM 15465 / Z2491).